Consider the following 283-residue polypeptide: 4-hydroxy-3-methylbut-2-enyl diphosphate reductase (283 aa).

Cys12 contributes to the [4Fe-4S] cluster binding site. Residues His40 and His73 each contribute to the (2E)-4-hydroxy-3-methylbut-2-enyl diphosphate site. His40 and His73 together coordinate dimethylallyl diphosphate. Residues His40 and His73 each contribute to the isopentenyl diphosphate site. Cys95 is a binding site for [4Fe-4S] cluster. Position 123 (His123) interacts with (2E)-4-hydroxy-3-methylbut-2-enyl diphosphate. His123 serves as a coordination point for dimethylallyl diphosphate. His123 contributes to the isopentenyl diphosphate binding site. Residue Glu125 is the Proton donor of the active site. Residue Thr161 participates in (2E)-4-hydroxy-3-methylbut-2-enyl diphosphate binding. [4Fe-4S] cluster is bound at residue Cys189. Ser217, Asn219, and Ser261 together coordinate (2E)-4-hydroxy-3-methylbut-2-enyl diphosphate. Positions 217, 219, and 261 each coordinate dimethylallyl diphosphate. The isopentenyl diphosphate site is built by Ser217, Asn219, and Ser261.

It belongs to the IspH family. [4Fe-4S] cluster serves as cofactor.

It catalyses the reaction isopentenyl diphosphate + 2 oxidized [2Fe-2S]-[ferredoxin] + H2O = (2E)-4-hydroxy-3-methylbut-2-enyl diphosphate + 2 reduced [2Fe-2S]-[ferredoxin] + 2 H(+). The enzyme catalyses dimethylallyl diphosphate + 2 oxidized [2Fe-2S]-[ferredoxin] + H2O = (2E)-4-hydroxy-3-methylbut-2-enyl diphosphate + 2 reduced [2Fe-2S]-[ferredoxin] + 2 H(+). It functions in the pathway isoprenoid biosynthesis; dimethylallyl diphosphate biosynthesis; dimethylallyl diphosphate from (2E)-4-hydroxy-3-methylbutenyl diphosphate: step 1/1. It participates in isoprenoid biosynthesis; isopentenyl diphosphate biosynthesis via DXP pathway; isopentenyl diphosphate from 1-deoxy-D-xylulose 5-phosphate: step 6/6. Its function is as follows. Catalyzes the conversion of 1-hydroxy-2-methyl-2-(E)-butenyl 4-diphosphate (HMBPP) into a mixture of isopentenyl diphosphate (IPP) and dimethylallyl diphosphate (DMAPP). Acts in the terminal step of the DOXP/MEP pathway for isoprenoid precursor biosynthesis. The polypeptide is 4-hydroxy-3-methylbut-2-enyl diphosphate reductase (Geobacter sp. (strain M21)).